The primary structure comprises 276 residues: Probable NADH-ubiquinone oxidoreductase 30.4 kDa subunit, mitochondrial (276 aa).

The disordered stretch occupies residues 248-276 (EPVGEGKDFTPESFKLPTPQPEPEQEEKK).

It belongs to the complex I 30 kDa subunit family. As to quaternary structure, complex I is composed of about 30 different subunits. This is a component of the iron-sulfur protein fraction.

The protein resides in the mitochondrion inner membrane. It carries out the reaction a ubiquinone + NADH + 5 H(+)(in) = a ubiquinol + NAD(+) + 4 H(+)(out). Functionally, core subunit of the mitochondrial membrane respiratory chain NADH dehydrogenase (Complex I) that is believed to belong to the minimal assembly required for catalysis. Complex I functions in the transfer of electrons from NADH to the respiratory chain. The immediate electron acceptor for the enzyme is believed to be ubiquinone. Essential for N-alkane assimilation. This Candida maltosa (Yeast) protein is Probable NADH-ubiquinone oxidoreductase 30.4 kDa subunit, mitochondrial (ALI1).